Here is a 323-residue protein sequence, read N- to C-terminus: Mas-related G-protein coupled receptor member B4 (323 aa).

Over M1 to N34 the chain is Extracellular. An N-linked (GlcNAc...) asparagine glycan is attached at N11. The helical transmembrane segment at F35–L55 threads the bilayer. The Cytoplasmic portion of the chain corresponds to G56–A63. The helical transmembrane segment at F64–V84 threads the bilayer. Residues Y85–F98 are Extracellular-facing. A helical membrane pass occupies residues Y99–I119. Residues S120–A147 lie on the Cytoplasmic side of the membrane. A helical membrane pass occupies residues L148–F168. Residues S169–N180 lie on the Extracellular side of the membrane. The chain crosses the membrane as a helical span at residues F181–L201. The Cytoplasmic portion of the chain corresponds to L202–T224. The helical transmembrane segment at V225 to I245 threads the bilayer. At H246 to E255 the chain is on the extracellular side. The helical transmembrane segment at M256–G276 threads the bilayer. Topologically, residues S277–S323 are cytoplasmic. Residues D298–S323 are disordered. Over residues K312 to S323 the composition is skewed to basic and acidic residues.

It belongs to the G-protein coupled receptor 1 family. Mas subfamily. As to expression, expressed strongly in newborn dorsal root ganglia, adult dorsal root ganglia and trigeminal ganlia.

The protein resides in the membrane. Its function is as follows. Orphan receptor. Probably involved in the function of nociceptive neurons. May regulate nociceptor function and/or development, including the sensation or modulation of pain. The chain is Mas-related G-protein coupled receptor member B4 (Mrgprb4) from Rattus norvegicus (Rat).